A 763-amino-acid chain; its full sequence is Phosphoglycerol transferase I (763 aa).

4 consecutive transmembrane segments (helical) span residues 4–19, 26–48, 76–98, and 105–127; these read LLSF…IYAW, WWFA…LFAS, YILP…GWIL, and PHHF…ASPA.

The protein belongs to the OpgB family.

The protein localises to the cell inner membrane. It carries out the reaction a phosphatidylglycerol + a membrane-derived-oligosaccharide D-glucose = a 1,2-diacyl-sn-glycerol + a membrane-derived-oligosaccharide 6-(glycerophospho)-D-glucose.. It participates in glycan metabolism; osmoregulated periplasmic glucan (OPG) biosynthesis. Functionally, transfers a phosphoglycerol residue from phosphatidylglycerol to the membrane-bound nascent glucan backbones. The sequence is that of Phosphoglycerol transferase I from Shigella flexneri.